The primary structure comprises 87 residues: UPF0237 protein YjhC (87 aa).

The ACT domain maps to 4 to 76 (VVTVVGADKI…EALGVNIHVQ (73 aa)).

Belongs to the UPF0237 family.

The sequence is that of UPF0237 protein YjhC (yjhC) from Lactococcus lactis subsp. lactis (strain IL1403) (Streptococcus lactis).